Reading from the N-terminus, the 258-residue chain is 1-(5-phosphoribosyl)-5-[(5-phosphoribosylamino)methylideneamino] imidazole-4-carboxamide isomerase (258 aa).

The Proton acceptor role is filled by Asp-9. The active-site Proton donor is Asp-131.

Belongs to the HisA/HisF family.

The protein resides in the cytoplasm. It catalyses the reaction 1-(5-phospho-beta-D-ribosyl)-5-[(5-phospho-beta-D-ribosylamino)methylideneamino]imidazole-4-carboxamide = 5-[(5-phospho-1-deoxy-D-ribulos-1-ylimino)methylamino]-1-(5-phospho-beta-D-ribosyl)imidazole-4-carboxamide. It functions in the pathway amino-acid biosynthesis; L-histidine biosynthesis; L-histidine from 5-phospho-alpha-D-ribose 1-diphosphate: step 4/9. The polypeptide is 1-(5-phosphoribosyl)-5-[(5-phosphoribosylamino)methylideneamino] imidazole-4-carboxamide isomerase (Salinibacter ruber (strain DSM 13855 / M31)).